A 218-amino-acid chain; its full sequence is Cytochrome b6 (218 aa).

A helical transmembrane segment spans residues 35–55 (IFYCLGGITLVCFLIQFATGF). A heme c-binding site is contributed by cysteine 38. Heme b contacts are provided by histidine 89 and histidine 103. 3 helical membrane-spanning segments follow: residues 93–113 (ASMMVLMLILHVFRVYLTGGF), 119–139 (LTWVTGVVMAVITVAFGVTGY), and 189–209 (LHTFVLPWSLAVFMLMHFLMI). Positions 190 and 205 each coordinate heme b.

This sequence belongs to the cytochrome b family. PetB subfamily. The 4 large subunits of the cytochrome b6-f complex are cytochrome b6, subunit IV (17 kDa polypeptide, PetD), cytochrome f and the Rieske protein, while the 4 small subunits are PetG, PetL, PetM and PetN. The complex functions as a dimer. Heme b is required as a cofactor. Heme c serves as cofactor.

The protein localises to the cellular thylakoid membrane. In terms of biological role, component of the cytochrome b6-f complex, which mediates electron transfer between photosystem II (PSII) and photosystem I (PSI), cyclic electron flow around PSI, and state transitions. This is Cytochrome b6 from Prochlorococcus marinus (strain MIT 9301).